The chain runs to 368 residues: G kinase-anchoring protein 1 (368 aa).

Disordered regions lie at residues 18-127, 152-260, and 333-368; these read LQVD…WKQR, EEHK…VRTE, and LHTA…EGDV. The span at 33-56 shows a compositional bias: low complexity; it reads PKAAGRGAGKPRSGKSPSGKNSQN. The stretch at 52-82 forms a coiled coil; sequence KNSQNNEKKKEKRRRKKEQQQSEANELRSLA. Composition is skewed to polar residues over residues 88 to 100 and 109 to 121; these read QKST…TLQD and ANVQ…QENW. A compositionally biased stretch (basic and acidic residues) spans 152 to 162; that stretch reads EEHKKDADKAE. Over residues 170-180 the composition is skewed to basic residues; sequence TGGKKDRKKNQ. Basic and acidic residues predominate over residues 194-238; the sequence is FQQEDQLKNKPEREPVNPALRDDKFFNKLEDDVSKIVQRDKRREQ. Polar residues predominate over residues 239 to 250; sequence YSNSAGQEVNTS. Residues 251 to 260 are compositionally biased toward basic and acidic residues; it reads SEHEQDVRTE. Positions 256–350 form a coiled coil; that stretch reads DVRTEQLKYE…RSKVKGLQSE (95 aa).

The protein belongs to the GKAP1 family.

The protein localises to the golgi apparatus. May play a role in the regulation of insulin-dependent IRS1 tyrosine phosphorylation in adipocytes. This is G kinase-anchoring protein 1 (gkap1) from Danio rerio (Zebrafish).